The primary structure comprises 687 residues: Putative secreted metallopeptidase (687 aa).

The first 22 residues, 1–22, serve as a signal peptide directing secretion; the sequence is MLFTSTAVAALSGALLIQPALA. N-linked (GlcNAc...) asparagine glycosylation is found at asparagine 54, asparagine 114, asparagine 252, asparagine 256, and asparagine 379.

This sequence belongs to the peptidase M10B family.

Its subcellular location is the secreted. The protein is Putative secreted metallopeptidase of Arthroderma benhamiae (strain ATCC MYA-4681 / CBS 112371) (Trichophyton mentagrophytes).